A 475-amino-acid polypeptide reads, in one-letter code: Beta-amyrin 28-monooxygenase (475 aa).

The helical transmembrane segment at 2–22 (YLTILFLFVSSILLSLMFLLR) threads the bilayer. Cysteine 422 serves as a coordination point for heme.

The protein belongs to the cytochrome P450 family. The cofactor is heme.

It is found in the membrane. It carries out the reaction beta-amyrin + 3 reduced [NADPH--hemoprotein reductase] + 3 O2 = oleanolate + 3 oxidized [NADPH--hemoprotein reductase] + 4 H2O + 4 H(+). In terms of biological role, catalyzes the oxidation of the methyl group to a carboxyl group at the C-28 position of beta-amyrin to form oleanolate. The polypeptide is Beta-amyrin 28-monooxygenase (Barbarea vulgaris (Yellow rocket)).